The following is a 238-amino-acid chain: Fatty acid metabolism regulator protein (238 aa).

The region spanning 6–74 (KGPASFAEKY…HGKPTRVNNF (69 aa)) is the HTH gntR-type domain. Residues 34–53 (ERELSELIGVTRTTLREVLQ) constitute a DNA-binding region (H-T-H motif).

Homodimer.

The protein resides in the cytoplasm. In terms of biological role, multifunctional regulator of fatty acid metabolism. This Shewanella baltica (strain OS223) protein is Fatty acid metabolism regulator protein.